Consider the following 294-residue polypeptide: Pyridoxal 5'-phosphate synthase subunit PdxS (294 aa).

D-ribose 5-phosphate is bound at residue aspartate 24. Lysine 81 acts as the Schiff-base intermediate with D-ribose 5-phosphate in catalysis. A D-ribose 5-phosphate-binding site is contributed by glycine 153. Position 165 (arginine 165) interacts with D-glyceraldehyde 3-phosphate. D-ribose 5-phosphate contacts are provided by residues glycine 214 and 235–236; that span reads GS.

The protein belongs to the PdxS/SNZ family. As to quaternary structure, in the presence of PdxT, forms a dodecamer of heterodimers.

It catalyses the reaction aldehydo-D-ribose 5-phosphate + D-glyceraldehyde 3-phosphate + L-glutamine = pyridoxal 5'-phosphate + L-glutamate + phosphate + 3 H2O + H(+). Its pathway is cofactor biosynthesis; pyridoxal 5'-phosphate biosynthesis. Catalyzes the formation of pyridoxal 5'-phosphate from ribose 5-phosphate (RBP), glyceraldehyde 3-phosphate (G3P) and ammonia. The ammonia is provided by the PdxT subunit. Can also use ribulose 5-phosphate and dihydroxyacetone phosphate as substrates, resulting from enzyme-catalyzed isomerization of RBP and G3P, respectively. The protein is Pyridoxal 5'-phosphate synthase subunit PdxS of Bacillus pumilus (strain SAFR-032).